Consider the following 2156-residue polypeptide: Oxygen-regulated protein 1 (2156 aa).

The segment covering 1–19 has biased composition (polar residues); that stretch reads MSDTPSTGFSIIHPTSSEG. Residues 1–25 are disordered; the sequence is MSDTPSTGFSIIHPTSSEGQVPPPR. Doublecortin domains follow at residues 36–118 and 154–233; these read KRIS…VDLD and RSLV…GNYD. 4 disordered regions span residues 353 to 375, 666 to 686, 1438 to 1458, and 1590 to 1621; these read VSKT…RTES, SSVA…SRYQ, DMEE…MTSS, and DWSD…TQEK.

In terms of assembly, interacts (via the doublecortin domains) with microtubules. Interacts with RP1L1. Interacts with MAK. As to expression, expressed in retina. Not expressed in heart, brain, placenta, lung, liver, skeletal muscle, kidney, spleen and pancreas.

It localises to the cytoplasm. The protein resides in the cytoskeleton. Its subcellular location is the cilium axoneme. It is found in the cell projection. The protein localises to the cilium. It localises to the photoreceptor outer segment. Its function is as follows. Microtubule-associated protein regulating the stability and length of the microtubule-based axoneme of photoreceptors. Required for the differentiation of photoreceptor cells, it plays a role in the organization of the outer segment of rod and cone photoreceptors ensuring the correct orientation and higher-order stacking of outer segment disks along the photoreceptor axoneme. In Homo sapiens (Human), this protein is Oxygen-regulated protein 1 (RP1).